Here is a 201-residue protein sequence, read N- to C-terminus: MAKVLYVKANPKNNEESRTFRISEHFINEYKKAHPEDEIIELDLYKENIHFLSKEEINTIMSKDKSNLKDHPVLKYTYQFAEADKYVIATPMWNLSIPAILKAYFDYITVTGITFKYTENGAVGLLKNKKAVVIMSTGGEYLTPPFDQWNFASTYVTTMFKFFGVEDVSLIAAQRLDIIGEDVEKRVSDAMKEAEQLAKQF.

FMN is bound by residues 92–95 (MWNL) and 136–139 (STGG).

The protein belongs to the azoreductase type 1 family. In terms of assembly, homodimer. It depends on FMN as a cofactor.

The catalysed reaction is 2 a quinone + NADH + H(+) = 2 a 1,4-benzosemiquinone + NAD(+). It carries out the reaction N,N-dimethyl-1,4-phenylenediamine + anthranilate + 2 NAD(+) = 2-(4-dimethylaminophenyl)diazenylbenzoate + 2 NADH + 2 H(+). Functionally, quinone reductase that provides resistance to thiol-specific stress caused by electrophilic quinones. Also exhibits azoreductase activity. Catalyzes the reductive cleavage of the azo bond in aromatic azo compounds to the corresponding amines. This is FMN-dependent NADH:quinone oxidoreductase from Coprothermobacter proteolyticus (strain ATCC 35245 / DSM 5265 / OCM 4 / BT).